The chain runs to 158 residues: UPAR/Ly6 domain-containing protein crim (158 aa).

Positions 1-22 (MHYHTNLIAALLLAALIHEGSA) are cleaved as a signal peptide. At 23–136 (IWCYRCTSAT…FCFLDHRCNG (114 aa)) the chain is on the extracellular side. N-linked (GlcNAc...) asparagine glycosylation occurs at N107. N135 carries the GPI-anchor amidated asparagine lipid modification. The propeptide at 136 to 158 (GASGLQTSAVIGLLTLIPALLLR) is removed in mature form. Residues 137–157 (ASGLQTSAVIGLLTLIPALLL) traverse the membrane as a helical segment. Residue R158 is a topological domain, cytoplasmic.

This sequence belongs to the quiver family.

It is found in the membrane. Required for septate junction assembly possibly by organizing the preassembly and transport of septate junction proteins. Involved in epithelial cell septate junction-mediated paracellular barrier functions of trachea, hindgut and salivary gland. The chain is UPAR/Ly6 domain-containing protein crim from Drosophila melanogaster (Fruit fly).